A 133-amino-acid polypeptide reads, in one-letter code: Putative nickel-responsive regulator (133 aa).

Residues His-74, His-85, His-87, and Cys-93 each contribute to the Ni(2+) site.

The protein belongs to the transcriptional regulatory CopG/NikR family. Requires Ni(2+) as cofactor.

Its function is as follows. Transcriptional regulator. The polypeptide is Putative nickel-responsive regulator (Saccharolobus islandicus (strain Y.N.15.51 / Yellowstone #2) (Sulfolobus islandicus)).